A 334-amino-acid chain; its full sequence is MASRGNRARSQPVDNTISYVQCDGLAAMKMVKHCHEESLNNMEVAQGALLGLVVDDRLEITNCFPFPKSDETIDEEEYQLNMMRRLRHVNVDHFHVGWYQSADVGNFLSSTLLESQYHYQTSIEESVVVIYDTQKSARGFLTLKAYRLTPQAIAMYKERDFTPEALRNLKVGYENLFIEIPIVIKNSALCNIMMSELTELVPEEEGTHFLDLGTASVLENHLRCMMDRVDELNHEATKFNKYQQAAIRQEQEKHRMLAKHAQENAARIAKGEQAVPEEEVNKLFRPIPVPTRLNPMIVSGQINTYAQHISQFCSQSLAKLYMTQALQNAKDNKQ.

The MPN domain maps to 20 to 152; that stretch reads VQCDGLAAMK…LKAYRLTPQA (133 aa).

The protein belongs to the eIF-3 subunit H family. As to quaternary structure, component of the eukaryotic translation initiation factor 3 (eIF-3) complex.

The protein localises to the cytoplasm. In terms of biological role, component of the eukaryotic translation initiation factor 3 (eIF-3) complex, which is involved in protein synthesis of a specialized repertoire of mRNAs and, together with other initiation factors, stimulates binding of mRNA and methionyl-tRNAi to the 40S ribosome. The eIF-3 complex specifically targets and initiates translation of a subset of mRNAs involved in cell proliferation. In Anopheles gambiae (African malaria mosquito), this protein is Eukaryotic translation initiation factor 3 subunit H.